The sequence spans 434 residues: Enolase (434 aa).

Gln163 serves as a coordination point for (2R)-2-phosphoglycerate. The active-site Proton donor is Glu205. Mg(2+)-binding residues include Asp242, Glu291, and Asp318. Positions 343, 372, 373, and 394 each coordinate (2R)-2-phosphoglycerate. Catalysis depends on Lys343, which acts as the Proton acceptor.

Belongs to the enolase family. Mg(2+) is required as a cofactor.

It is found in the cytoplasm. It localises to the secreted. The protein resides in the cell surface. The catalysed reaction is (2R)-2-phosphoglycerate = phosphoenolpyruvate + H2O. The protein operates within carbohydrate degradation; glycolysis; pyruvate from D-glyceraldehyde 3-phosphate: step 4/5. Catalyzes the reversible conversion of 2-phosphoglycerate (2-PG) into phosphoenolpyruvate (PEP). It is essential for the degradation of carbohydrates via glycolysis. The sequence is that of Enolase from Streptococcus thermophilus (strain ATCC BAA-491 / LMD-9).